We begin with the raw amino-acid sequence, 382 residues long: Chaperone protein DnaJ (382 aa).

The 66-residue stretch at 5–70 folds into the J domain; sequence DYYELLGVQK…EKRAAYDRYG (66 aa). The segment at 146 to 224 adopts a CR-type zinc-finger fold; it reads GAEKEISFRK…CHGEGRVRRT (79 aa). Zn(2+)-binding residues include Cys159, Cys162, Cys176, Cys179, Cys198, Cys201, Cys212, and Cys215. CXXCXGXG motif repeat units follow at residues 159–166, 176–183, 198–205, and 212–219; these read CERCDGSG, CPTCRGAG, CPTCGGMG, and CTVCHGEG. A disordered region spans residues 230–250; it reads RIPPGVDNGSRLRSSGNGEAG.

It belongs to the DnaJ family. In terms of assembly, homodimer. Zn(2+) serves as cofactor.

It is found in the cytoplasm. Functionally, participates actively in the response to hyperosmotic and heat shock by preventing the aggregation of stress-denatured proteins and by disaggregating proteins, also in an autonomous, DnaK-independent fashion. Unfolded proteins bind initially to DnaJ; upon interaction with the DnaJ-bound protein, DnaK hydrolyzes its bound ATP, resulting in the formation of a stable complex. GrpE releases ADP from DnaK; ATP binding to DnaK triggers the release of the substrate protein, thus completing the reaction cycle. Several rounds of ATP-dependent interactions between DnaJ, DnaK and GrpE are required for fully efficient folding. Also involved, together with DnaK and GrpE, in the DNA replication of plasmids through activation of initiation proteins. The sequence is that of Chaperone protein DnaJ from Opitutus terrae (strain DSM 11246 / JCM 15787 / PB90-1).